A 475-amino-acid chain; its full sequence is uncharacterized protein (475 aa).

The segment at 42–292 (NLQNSLTGKT…NTRKGQRHNN (251 aa)) is disordered. Basic and acidic residues-rich tracts occupy residues 59–72 (EANHTSSDKSKSED) and 119–134 (IAEKQVEDRKLSDDSQ). 2 stretches are compositionally biased toward polar residues: residues 150–159 (ITPNFTHTPI) and 220–242 (NNTFGSQTVSSANGKEVPQTSED). The span at 243–263 (SSSQAPHHSSSSGHAPSQQGG) shows a compositional bias: low complexity. The segment covering 277 to 289 (FHHKGRNTRKGQR) has biased composition (basic residues). One can recognise an HTH La-type RNA-binding domain in the interval 319–408 (NPYLCDVQAF…MSIKVRRKET (90 aa)). Thr408 bears the Phosphothreonine mark. A Phosphoserine modification is found at Ser410.

It is found in the cytoplasm. This is an uncharacterized protein from Schizosaccharomyces pombe (strain 972 / ATCC 24843) (Fission yeast).